A 376-amino-acid chain; its full sequence is CCA-adding enzyme (376 aa).

Residues Gly-23 and Arg-26 each coordinate ATP. Residues Gly-23 and Arg-26 each coordinate CTP. Glu-36 and Asp-38 together coordinate Mg(2+). Residues Arg-106, Arg-152, and Arg-155 each coordinate ATP. 3 residues coordinate CTP: Arg-106, Arg-152, and Arg-155.

The protein belongs to the tRNA nucleotidyltransferase/poly(A) polymerase family. Bacterial CCA-adding enzyme type 2 subfamily. Mg(2+) is required as a cofactor.

The enzyme catalyses a tRNA precursor + 2 CTP + ATP = a tRNA with a 3' CCA end + 3 diphosphate. It carries out the reaction a tRNA with a 3' CCA end + 2 CTP + ATP = a tRNA with a 3' CCACCA end + 3 diphosphate. Its function is as follows. Catalyzes the addition and repair of the essential 3'-terminal CCA sequence in tRNAs without using a nucleic acid template. Adds these three nucleotides in the order of C, C, and A to the tRNA nucleotide-73, using CTP and ATP as substrates and producing inorganic pyrophosphate. tRNA 3'-terminal CCA addition is required both for tRNA processing and repair. Also involved in tRNA surveillance by mediating tandem CCA addition to generate a CCACCA at the 3' terminus of unstable tRNAs. While stable tRNAs receive only 3'-terminal CCA, unstable tRNAs are marked with CCACCA and rapidly degraded. The sequence is that of CCA-adding enzyme from Coxiella burnetii (strain RSA 331 / Henzerling II).